The primary structure comprises 806 residues: Disintegrin and metalloproteinase domain-containing protein 1b (806 aa).

A signal peptide spans 1–33 (MERLKLGKIPEHWCIRLVAMLLLAIIFLPSTFC). Residues 169-188 (CSVTPKDSPGDTSHPPRSRK) are disordered. In terms of domain architecture, Peptidase M12B spans 203–397 (KYVEMFVVVN…HRGVCLLDEP (195 aa)). Asparagine 224 carries N-linked (GlcNAc...) asparagine glycosylation. Intrachain disulfides connect cysteine 313–cysteine 392, cysteine 353–cysteine 376, cysteine 355–cysteine 361, cysteine 462–cysteine 482, cysteine 635–cysteine 647, cysteine 641–cysteine 653, and cysteine 655–cysteine 664. Histidine 338 is a binding site for Zn(2+). Glutamate 339 is an active-site residue. Zn(2+)-binding residues include histidine 342 and histidine 348. 2 N-linked (GlcNAc...) asparagine glycosylation sites follow: asparagine 375 and asparagine 476. The region spanning 406–490 (AANCGNGVVE…ACPSDRKAQD (85 aa)) is the Disintegrin domain. Positions 631-665 (FSFPCSPSKQCNKHGVCNDLGNCHCSFGFAPPDCK) constitute an EGF-like domain. The interval 668–694 (GTGGSVDSGPAVNLSNDSSPGPNSTQS) is disordered. Residues asparagine 680, asparagine 683, and asparagine 690 are each glycosylated (N-linked (GlcNAc...) asparagine). Polar residues predominate over residues 680-694 (NLSNDSSPGPNSTQS). The helical transmembrane segment at 705–725 (LIVLAVILVLMILLIIICIIS) threads the bilayer. Residues 726 to 806 (AYTKSETASE…KDEDEEEGEE (81 aa)) lie on the Cytoplasmic side of the membrane. A disordered region spans residues 735–806 (EAGPSELEEL…KDEDEEEGEE (72 aa)). Acidic residues predominate over residues 740–806 (ELEELPEGEK…KDEDEEEGEE (67 aa)).

As to quaternary structure, heterodimer with ADAM2/fertilin subunit beta. Testis.

Its subcellular location is the membrane. Functionally, may play a role in spermatogenesis and sperm maturation. The polypeptide is Disintegrin and metalloproteinase domain-containing protein 1b (Adam1b) (Mus musculus (Mouse)).